The sequence spans 122 residues: Large ribosomal subunit protein uL14 (122 aa).

This sequence belongs to the universal ribosomal protein uL14 family. As to quaternary structure, part of the 50S ribosomal subunit. Forms a cluster with proteins L3 and L19. In the 70S ribosome, L14 and L19 interact and together make contacts with the 16S rRNA in bridges B5 and B8.

Its function is as follows. Binds to 23S rRNA. Forms part of two intersubunit bridges in the 70S ribosome. This Moorella thermoacetica (strain ATCC 39073 / JCM 9320) protein is Large ribosomal subunit protein uL14.